Here is an 81-residue protein sequence, read N- to C-terminus: Photosystem I iron-sulfur center (81 aa).

2 4Fe-4S ferredoxin-type domains span residues 2–31 (AHSV…MVPW) and 39–68 (IASA…VRVY). Cys11, Cys14, Cys17, Cys21, Cys48, Cys51, Cys54, and Cys58 together coordinate [4Fe-4S] cluster.

As to quaternary structure, the eukaryotic PSI reaction center is composed of at least 11 subunits. The cofactor is [4Fe-4S] cluster.

Its subcellular location is the plastid. The protein resides in the chloroplast thylakoid membrane. It carries out the reaction reduced [plastocyanin] + hnu + oxidized [2Fe-2S]-[ferredoxin] = oxidized [plastocyanin] + reduced [2Fe-2S]-[ferredoxin]. Its function is as follows. Apoprotein for the two 4Fe-4S centers FA and FB of photosystem I (PSI); essential for photochemical activity. FB is the terminal electron acceptor of PSI, donating electrons to ferredoxin. The C-terminus interacts with PsaA/B/D and helps assemble the protein into the PSI complex. Required for binding of PsaD and PsaE to PSI. PSI is a plastocyanin/cytochrome c6-ferredoxin oxidoreductase, converting photonic excitation into a charge separation, which transfers an electron from the donor P700 chlorophyll pair to the spectroscopically characterized acceptors A0, A1, FX, FA and FB in turn. This is Photosystem I iron-sulfur center from Gracilaria tenuistipitata var. liui (Red alga).